Here is a 180-residue protein sequence, read N- to C-terminus: tRNA (cytidine(56)-2'-O)-methyltransferase (180 aa).

S-adenosyl-L-methionine-binding positions include L82, 112 to 116 (GAEKV), and 130 to 137 (VGNQPHSE).

It belongs to the aTrm56 family. As to quaternary structure, homodimer.

The protein localises to the cytoplasm. The catalysed reaction is cytidine(56) in tRNA + S-adenosyl-L-methionine = 2'-O-methylcytidine(56) in tRNA + S-adenosyl-L-homocysteine + H(+). Specifically catalyzes the AdoMet-dependent 2'-O-ribose methylation of cytidine at position 56 in tRNAs. The sequence is that of tRNA (cytidine(56)-2'-O)-methyltransferase from Methanococcus vannielii (strain ATCC 35089 / DSM 1224 / JCM 13029 / OCM 148 / SB).